The chain runs to 80 residues: Conotoxin VnMSGL-0121 (80 aa).

Residues 1–20 form the signal peptide; the sequence is MSGLGIMVLTLLLLVSMATS. The propeptide occupies 21–44; it reads HQDGGGKQATQRDAINVRRRRSIT. 3 cysteine pairs are disulfide-bonded: cysteine 52–cysteine 65, cysteine 56–cysteine 74, and cysteine 64–cysteine 78. Position 79 is a phenylalanine amide (phenylalanine 79).

It belongs to the conotoxin O3 superfamily. Expressed by the venom duct.

It localises to the secreted. The polypeptide is Conotoxin VnMSGL-0121 (Conus ventricosus (Mediterranean cone)).